The primary structure comprises 448 residues: Methylenetetrahydrofolate--tRNA-(uracil-5-)-methyltransferase TrmFO (448 aa).

Position 13–18 (13–18 (GAGLAG)) interacts with FAD.

Belongs to the MnmG family. TrmFO subfamily. It depends on FAD as a cofactor.

Its subcellular location is the cytoplasm. The catalysed reaction is uridine(54) in tRNA + (6R)-5,10-methylene-5,6,7,8-tetrahydrofolate + NADH + H(+) = 5-methyluridine(54) in tRNA + (6S)-5,6,7,8-tetrahydrofolate + NAD(+). The enzyme catalyses uridine(54) in tRNA + (6R)-5,10-methylene-5,6,7,8-tetrahydrofolate + NADPH + H(+) = 5-methyluridine(54) in tRNA + (6S)-5,6,7,8-tetrahydrofolate + NADP(+). Its function is as follows. Catalyzes the folate-dependent formation of 5-methyl-uridine at position 54 (M-5-U54) in all tRNAs. This chain is Methylenetetrahydrofolate--tRNA-(uracil-5-)-methyltransferase TrmFO, found in Streptococcus pyogenes serotype M12 (strain MGAS2096).